A 462-amino-acid polypeptide reads, in one-letter code: MSTGTVVQVIGAVVDVEFPQHAVPQVYDALKITGEGTCNGLVLEVQQQLGGGVVRTIAMGSSDGLRRGIEVENTGSAIAVPVGKATLGRIMNVLGEPVDEAGPIGEEDRYVIHRAAPSYEEQSNTTELLETGIKVIDLVCPFAKGGKVGLFGGAGVGKTVNMMELINNIAKAHSGLSVFAGVGERTREGNDFYYEMMESGVLDKVAMVYGQMNEPPGNRLRVALTGLTMAEKFRDEGKDVLLFVDNIYRYTLAGTEVSALLGRMPSAVGYQPTLAEEMGVLQERITSTKTGSITSVQAVYVPADDLTDPSPATTFAHLDATVVLSRQIASLGIYPAVDPLDSTSRQLDPLVVGQEHYDVANGVQNVLQRYKELKDIIAILGMDELSDDDKMTVSRARKIERFLSQPFHVAEVFTGSPGKYVPLKDTIRGFKGILEGEFDHVPEQAFYMVGSVDEAVEKANKK.

Residue 152–159 (GGAGVGKT) participates in ATP binding.

This sequence belongs to the ATPase alpha/beta chains family. In terms of assembly, F-type ATPases have 2 components, CF(1) - the catalytic core - and CF(0) - the membrane proton channel. CF(1) has five subunits: alpha(3), beta(3), gamma(1), delta(1), epsilon(1). CF(0) has three main subunits: a(1), b(2) and c(9-12). The alpha and beta chains form an alternating ring which encloses part of the gamma chain. CF(1) is attached to CF(0) by a central stalk formed by the gamma and epsilon chains, while a peripheral stalk is formed by the delta and b chains.

The protein localises to the cell inner membrane. It carries out the reaction ATP + H2O + 4 H(+)(in) = ADP + phosphate + 5 H(+)(out). Functionally, produces ATP from ADP in the presence of a proton gradient across the membrane. The catalytic sites are hosted primarily by the beta subunits. In Shewanella amazonensis (strain ATCC BAA-1098 / SB2B), this protein is ATP synthase subunit beta.